The primary structure comprises 326 residues: Acetyl-coenzyme A carboxylase carboxyl transferase subunit beta (326 aa).

One can recognise a CoA carboxyltransferase N-terminal domain in the interval 25 to 308 (LWVKCPASGE…RRDDRSTLQL (284 aa)). Residues 298-326 (RRRDDRSTLQLTPPKTHAPKPPEPKVKPD) form a disordered region. Residues 317–326 (KPPEPKVKPD) are compositionally biased toward basic and acidic residues.

It belongs to the AccD/PCCB family. As to quaternary structure, acetyl-CoA carboxylase is a heterohexamer composed of biotin carboxyl carrier protein (AccB), biotin carboxylase (AccC) and two subunits each of ACCase subunit alpha (AccA) and ACCase subunit beta (AccD).

The protein localises to the cytoplasm. It carries out the reaction N(6)-carboxybiotinyl-L-lysyl-[protein] + acetyl-CoA = N(6)-biotinyl-L-lysyl-[protein] + malonyl-CoA. It functions in the pathway lipid metabolism; malonyl-CoA biosynthesis; malonyl-CoA from acetyl-CoA: step 1/1. Component of the acetyl coenzyme A carboxylase (ACC) complex. Biotin carboxylase (BC) catalyzes the carboxylation of biotin on its carrier protein (BCCP) and then the CO(2) group is transferred by the transcarboxylase to acetyl-CoA to form malonyl-CoA. The protein is Acetyl-coenzyme A carboxylase carboxyl transferase subunit beta of Hyphomonas neptunium (strain ATCC 15444).